The primary structure comprises 183 residues: ATP-dependent protease subunit HslV (183 aa).

Residue threonine 7 is part of the active site. Positions 162, 165, and 168 each coordinate Na(+).

It belongs to the peptidase T1B family. HslV subfamily. A double ring-shaped homohexamer of HslV is capped on each side by a ring-shaped HslU homohexamer. The assembly of the HslU/HslV complex is dependent on binding of ATP.

The protein localises to the cytoplasm. It carries out the reaction ATP-dependent cleavage of peptide bonds with broad specificity.. Its activity is regulated as follows. Allosterically activated by HslU binding. Protease subunit of a proteasome-like degradation complex believed to be a general protein degrading machinery. The polypeptide is ATP-dependent protease subunit HslV (Alkalilimnicola ehrlichii (strain ATCC BAA-1101 / DSM 17681 / MLHE-1)).